The chain runs to 106 residues: Large ribosomal subunit protein bL21 (106 aa).

It belongs to the bacterial ribosomal protein bL21 family. Part of the 50S ribosomal subunit. Contacts protein L20.

Its function is as follows. This protein binds to 23S rRNA in the presence of protein L20. The protein is Large ribosomal subunit protein bL21 of Xylella fastidiosa (strain 9a5c).